A 305-amino-acid chain; its full sequence is Elongation factor Ts, mitochondrial (305 aa).

The protein belongs to the EF-Ts family.

It is found in the mitochondrion. Associates with the EF-Tu.GDP complex and induces the exchange of GDP to GTP. It remains bound to the aminoacyl-tRNA.EF-Tu.GTP complex up to the GTP hydrolysis stage on the ribosome. In Danio rerio (Zebrafish), this protein is Elongation factor Ts, mitochondrial (tsfm).